The following is a 656-amino-acid chain: ATP-dependent zinc metalloprotease FtsH (656 aa).

Topologically, residues 1 to 10 (MGDNRWLKNS) are cytoplasmic. A helical transmembrane segment spans residues 11 to 31 (FVYLIILVAALALFFQYLGPG). The Extracellular segment spans residues 32–116 (ASQTEEKGIA…IVQPAPAWGG (85 aa)). Residues 117–137 (LLSIFTILLPTLLLIGFFVFF) traverse the membrane as a helical segment. The Cytoplasmic segment spans residues 138-656 (MRQAQGSNNQ…GLGGPSPLPA (519 aa)). 209 to 216 (GPPGTGKT) is a binding site for ATP. Residue His-432 participates in Zn(2+) binding. Residue Glu-433 is part of the active site. Zn(2+) is bound by residues His-436 and Asp-511. Residues 622 to 632 (FSKSGSTTPNG) show a composition bias toward polar residues. Positions 622–656 (FSKSGSTTPNGRTEDRPAQPDAPQMGLGGPSPLPA) are disordered.

It in the central section; belongs to the AAA ATPase family. In the C-terminal section; belongs to the peptidase M41 family. Homohexamer. Zn(2+) is required as a cofactor.

Its subcellular location is the cell membrane. Functionally, acts as a processive, ATP-dependent zinc metallopeptidase for both cytoplasmic and membrane proteins. Plays a role in the quality control of integral membrane proteins. The chain is ATP-dependent zinc metalloprotease FtsH from Chloroflexus aggregans (strain MD-66 / DSM 9485).